A 447-amino-acid chain; its full sequence is Tubulin alpha-2 chain (447 aa).

Residues Q11, E71, G144, T145, T179, N206, and N228 each coordinate GTP. E71 lines the Mg(2+) pocket. The active site involves E254.

It belongs to the tubulin family. As to quaternary structure, dimer of alpha and beta chains. A typical microtubule is a hollow water-filled tube with an outer diameter of 25 nm and an inner diameter of 15 nM. Alpha-beta heterodimers associate head-to-tail to form protofilaments running lengthwise along the microtubule wall with the beta-tubulin subunit facing the microtubule plus end conferring a structural polarity. Microtubules usually have 13 protofilaments but different protofilament numbers can be found in some organisms and specialized cells. Mg(2+) is required as a cofactor. Post-translationally, undergoes a tyrosination/detyrosination cycle, the cyclic removal and re-addition of a C-terminal tyrosine residue by the enzymes tubulin tyrosine carboxypeptidase (TTCP) and tubulin tyrosine ligase (TTL), respectively.

The protein resides in the cytoplasm. Its subcellular location is the cytoskeleton. The catalysed reaction is GTP + H2O = GDP + phosphate + H(+). Functionally, tubulin is the major constituent of microtubules, a cylinder consisting of laterally associated linear protofilaments composed of alpha- and beta-tubulin heterodimers. Microtubules grow by the addition of GTP-tubulin dimers to the microtubule end, where a stabilizing cap forms. Below the cap, tubulin dimers are in GDP-bound state, owing to GTPase activity of alpha-tubulin. This chain is Tubulin alpha-2 chain (TUBA2), found in Eleusine indica (Goosegrass).